The following is a 157-amino-acid chain: Transcription elongation factor GreA (157 aa).

Residues 25 to 43 show a composition bias toward basic and acidic residues; it reads EGRAKVAEQLSEARDKGDL. The disordered stretch occupies residues 25 to 47; that stretch reads EGRAKVAEQLSEARDKGDLSENA. Residues 43 to 79 adopt a coiled-coil conformation; sequence LSENAEYDAAKEAQEILERRIAKLEELMINARVINKD.

Belongs to the GreA/GreB family.

Necessary for efficient RNA polymerase transcription elongation past template-encoded arresting sites. The arresting sites in DNA have the property of trapping a certain fraction of elongating RNA polymerases that pass through, resulting in locked ternary complexes. Cleavage of the nascent transcript by cleavage factors such as GreA or GreB allows the resumption of elongation from the new 3'terminus. GreA releases sequences of 2 to 3 nucleotides. This is Transcription elongation factor GreA from Amoebophilus asiaticus (strain 5a2).